Consider the following 68-residue polypeptide: Sec-independent protein translocase protein TatA (68 aa).

Residues 1–21 (MGSLSIWHWLIVLLIVVLVFG) traverse the membrane as a helical segment. The segment at 42-68 (GMNEGAKDGQPPAKDAGRIIDGEADKK) is disordered. Residues 56–68 (DAGRIIDGEADKK) are compositionally biased toward basic and acidic residues.

The protein belongs to the TatA/E family. The Tat system comprises two distinct complexes: a TatABC complex, containing multiple copies of TatA, TatB and TatC subunits, and a separate TatA complex, containing only TatA subunits. Substrates initially bind to the TatABC complex, which probably triggers association of the separate TatA complex to form the active translocon.

Its subcellular location is the cell inner membrane. In terms of biological role, part of the twin-arginine translocation (Tat) system that transports large folded proteins containing a characteristic twin-arginine motif in their signal peptide across membranes. TatA could form the protein-conducting channel of the Tat system. This chain is Sec-independent protein translocase protein TatA, found in Chromobacterium violaceum (strain ATCC 12472 / DSM 30191 / JCM 1249 / CCUG 213 / NBRC 12614 / NCIMB 9131 / NCTC 9757 / MK).